The primary structure comprises 98 residues: Protein translation factor SUI1 homolog (98 aa).

It belongs to the SUI1 family.

The sequence is that of Protein translation factor SUI1 homolog from Thermococcus gammatolerans (strain DSM 15229 / JCM 11827 / EJ3).